A 90-amino-acid polypeptide reads, in one-letter code: Bombyxin B-7 (90 aa).

Positions 1-20 are cleaved as a signal peptide; sequence MMKTSVMLMLVVVISLMCSG. 3 cysteine pairs are disulfide-bonded: cysteine 30-cysteine 76, cysteine 42-cysteine 89, and cysteine 75-cysteine 80. Positions 49-67 are cleaved as a propeptide — c peptide like; the sequence is GGAQYAPYFWTRQYLGSRG.

It belongs to the insulin family. Heterodimer of a B chain and an A chain linked by two disulfide bonds.

It localises to the secreted. In terms of biological role, brain peptide responsible for activation of prothoracic glands to produce ecdysone in insects. In Bombyx mori (Silk moth), this protein is Bombyxin B-7 (BBXB7).